A 336-amino-acid chain; its full sequence is Holliday junction branch migration complex subunit RuvB (336 aa).

The tract at residues 4 to 185 (MDERLLSGES…FGVLSRLEYY (182 aa)) is large ATPase domain (RuvB-L). ATP contacts are provided by residues leucine 24, arginine 25, glycine 66, lysine 69, threonine 70, threonine 71, 132–134 (EDF), arginine 175, tyrosine 185, and arginine 222. Position 70 (threonine 70) interacts with Mg(2+). Residues 186–256 (TVDQLSAIVE…ITQMALELLQ (71 aa)) form a small ATPAse domain (RuvB-S) region. The interval 259 to 336 (KLGLDHIDHK…EHFGMEMPKV (78 aa)) is head domain (RuvB-H). DNA-binding residues include arginine 314 and arginine 319.

Belongs to the RuvB family. In terms of assembly, homohexamer. Forms an RuvA(8)-RuvB(12)-Holliday junction (HJ) complex. HJ DNA is sandwiched between 2 RuvA tetramers; dsDNA enters through RuvA and exits via RuvB. An RuvB hexamer assembles on each DNA strand where it exits the tetramer. Each RuvB hexamer is contacted by two RuvA subunits (via domain III) on 2 adjacent RuvB subunits; this complex drives branch migration. In the full resolvosome a probable DNA-RuvA(4)-RuvB(12)-RuvC(2) complex forms which resolves the HJ.

The protein localises to the cytoplasm. It catalyses the reaction ATP + H2O = ADP + phosphate + H(+). Its function is as follows. The RuvA-RuvB-RuvC complex processes Holliday junction (HJ) DNA during genetic recombination and DNA repair, while the RuvA-RuvB complex plays an important role in the rescue of blocked DNA replication forks via replication fork reversal (RFR). RuvA specifically binds to HJ cruciform DNA, conferring on it an open structure. The RuvB hexamer acts as an ATP-dependent pump, pulling dsDNA into and through the RuvAB complex. RuvB forms 2 homohexamers on either side of HJ DNA bound by 1 or 2 RuvA tetramers; 4 subunits per hexamer contact DNA at a time. Coordinated motions by a converter formed by DNA-disengaged RuvB subunits stimulates ATP hydrolysis and nucleotide exchange. Immobilization of the converter enables RuvB to convert the ATP-contained energy into a lever motion, pulling 2 nucleotides of DNA out of the RuvA tetramer per ATP hydrolyzed, thus driving DNA branch migration. The RuvB motors rotate together with the DNA substrate, which together with the progressing nucleotide cycle form the mechanistic basis for DNA recombination by continuous HJ branch migration. Branch migration allows RuvC to scan DNA until it finds its consensus sequence, where it cleaves and resolves cruciform DNA. The protein is Holliday junction branch migration complex subunit RuvB of Bacillus cereus (strain ZK / E33L).